Here is a 367-residue protein sequence, read N- to C-terminus: tRNA-specific 2-thiouridylase MnmA (367 aa).

ATP is bound by residues G13–S20 and M39. Positions N99 to D101 are interaction with target base in tRNA. C104 functions as the Nucleophile in the catalytic mechanism. C104 and C200 form a disulfide bridge. G128 contacts ATP. Positions K150–Q152 are interaction with tRNA. C200 serves as the catalytic Cysteine persulfide intermediate. The tract at residues R307–Y308 is interaction with tRNA.

The protein belongs to the MnmA/TRMU family.

It localises to the cytoplasm. The enzyme catalyses S-sulfanyl-L-cysteinyl-[protein] + uridine(34) in tRNA + AH2 + ATP = 2-thiouridine(34) in tRNA + L-cysteinyl-[protein] + A + AMP + diphosphate + H(+). Catalyzes the 2-thiolation of uridine at the wobble position (U34) of tRNA, leading to the formation of s(2)U34. In Neisseria meningitidis serogroup A / serotype 4A (strain DSM 15465 / Z2491), this protein is tRNA-specific 2-thiouridylase MnmA.